The sequence spans 149 residues: Large ribosomal subunit protein uL22 (149 aa).

This sequence belongs to the universal ribosomal protein uL22 family. As to quaternary structure, part of the 50S ribosomal subunit.

Functionally, this protein binds specifically to 23S rRNA; its binding is stimulated by other ribosomal proteins, e.g. L4, L17, and L20. It is important during the early stages of 50S assembly. It makes multiple contacts with different domains of the 23S rRNA in the assembled 50S subunit and ribosome. In terms of biological role, the globular domain of the protein is located near the polypeptide exit tunnel on the outside of the subunit, while an extended beta-hairpin is found that lines the wall of the exit tunnel in the center of the 70S ribosome. The chain is Large ribosomal subunit protein uL22 from Petrotoga mobilis (strain DSM 10674 / SJ95).